The primary structure comprises 319 residues: Cell division protein PomZ (319 aa).

61-68 (KGGTGKTS) is a binding site for ATP.

This sequence belongs to the ParA family. In terms of assembly, interacts with FtsZ in pull-down experiments.

It localises to the cytoplasm. Its function is as follows. Spatial regulator of cell division that is involved in identifying the incipient division site, recruiting FtsZ to the division site and stabilizing the Z-ring. Binds ATP and GTP. In Myxococcus xanthus (strain DK1622), this protein is Cell division protein PomZ.